The chain runs to 931 residues: Envelope glycoprotein B (931 aa).

A signal peptide spans 1-71 (MSPCGYYSKW…FSMFVTAVVS (71 aa)). Residues 72–786 (VSPSSFYESL…HGFTTFLSNP (715 aa)) are Virion surface-facing. Intrachain disulfides connect cysteine 122–cysteine 584, cysteine 139–cysteine 540, cysteine 213–cysteine 277, cysteine 369–cysteine 417, and cysteine 608–cysteine 645. N-linked (GlcNAc...) asparagine; by host glycosylation is present at asparagine 147. The segment at 179–185 (AWAGSSY) is involved in fusion and/or binding to host membrane. N-linked (GlcNAc...) asparagine; by host glycosylation is present at asparagine 257. Residues 264-271 (GTPGTYRT) form an involved in fusion and/or binding to host membrane region. 4 N-linked (GlcNAc...) asparagine; by host glycosylation sites follow: asparagine 435, asparagine 503, asparagine 620, and asparagine 686. 2 hydrophobic membrane proximal region regions span residues 731 to 784 (IDKV…TFLS) and 764 to 784 (VVLG…TFLS). The chain crosses the membrane as a helical span at residues 787–807 (FGALAVGLLVLAGLVAAFFAY). Residues 808–931 (RYVLKLKTSP…RVRTENVTGV (124 aa)) are Intravirion-facing. The Golgi targeting motif lies at 881–884 (YMTL). The Di-leucine internalization motif signature appears at 904–906 (LLT). The short motif at 920 to 923 (YSRV) is the Internalization motif element.

The protein belongs to the herpesviridae glycoprotein B family. In terms of assembly, homotrimer; disulfide-linked. Binds to heparan sulfate proteoglycans. Interacts with gH/gL heterodimer. Interacts with gE. A proteolytic cleavage by host furin generates two subunits that remain linked by disulfide bonds.

It localises to the virion membrane. The protein localises to the host cell membrane. It is found in the host endosome membrane. Its subcellular location is the host Golgi apparatus membrane. Its function is as follows. Envelope glycoprotein that forms spikes at the surface of virion envelope. Essential for the initial attachment to heparan sulfate moieties of the host cell surface proteoglycans. Involved in fusion of viral and cellular membranes leading to virus entry into the host cell. Following initial binding to its host receptors, membrane fusion is mediated by the fusion machinery composed at least of gB and the heterodimer gH/gL. May be involved in the fusion between the virion envelope and the outer nuclear membrane during virion egress. The polypeptide is Envelope glycoprotein B (Varicella-zoster virus (strain Dumas) (HHV-3)).